A 183-amino-acid chain; its full sequence is Orotate phosphoribosyltransferase (183 aa).

5-phospho-alpha-D-ribose 1-diphosphate-binding positions include R90, K91, K94, and 115 to 123; that span reads DDVATTGGS. The orotate site is built by T119 and R147.

Belongs to the purine/pyrimidine phosphoribosyltransferase family. PyrE subfamily. In terms of assembly, homodimer. Mg(2+) serves as cofactor.

It catalyses the reaction orotidine 5'-phosphate + diphosphate = orotate + 5-phospho-alpha-D-ribose 1-diphosphate. It functions in the pathway pyrimidine metabolism; UMP biosynthesis via de novo pathway; UMP from orotate: step 1/2. Its function is as follows. Catalyzes the transfer of a ribosyl phosphate group from 5-phosphoribose 1-diphosphate to orotate, leading to the formation of orotidine monophosphate (OMP). The sequence is that of Orotate phosphoribosyltransferase from Methanopyrus kandleri (strain AV19 / DSM 6324 / JCM 9639 / NBRC 100938).